The chain runs to 464 residues: MMSNGGDSSEIVRELEELKLKKAEIEHRISTLEAKLQDTAAVELYDAVSNGDSYLTAPELEHGLSPDQIYRYSRQLLLPSFAVEGQSNLLKSSVLVIGAGGLGSPALLYLAACGVGQLGIIDHDVVELNNMHRQIIHTEAFIGHPKVKSAAAACRSINSTIKVDEYVEALRTSNALEILSQYDIIVDATDNPPSRYMISDCCVLLGKPLVSGAALGMEGQLTVYNHNGGPCYRCLFPTPPPTSACQRCSDSGVLGVVPGVIGCLQALETIKLASLVGEPLSERMLLFDALSARMRIVKIRGRSSQCTVCGDNSSFNKQTFKDFDYEDFTQFPLFAGPLNLLPAESRISSKEFKEILQKKEQHVLLDVRPSHHYKIVSLPDSLNIPLANLETRLNELTSALKEKGNGHANTESCTNPSVFVVCRRGNDSQRAVQYLRESGFDSAKDIIGGLEAWAANVNPNFPTY.

Residues Gly101, Asp122, 129-133, Lys146, and 190-191 each bind ATP; these read NNMHR and DN. Zn(2+) is bound by residues Cys231 and Cys234. Cys248 acts as the Glycyl thioester intermediate; for adenylyltransferase activity in catalysis. Zn(2+) contacts are provided by Cys306 and Cys309. In terms of domain architecture, Rhodanese spans 358–462; that stretch reads KKEQHVLLDV…WAANVNPNFP (105 aa). Residue Cys422 is the Cysteine persulfide intermediate; for sulfurtransferase activity of the active site.

In the N-terminal section; belongs to the HesA/MoeB/ThiF family. UBA4 subfamily. Requires Zn(2+) as cofactor.

The protein resides in the cytoplasm. The enzyme catalyses [molybdopterin-synthase sulfur-carrier protein]-C-terminal Gly-Gly + ATP + H(+) = [molybdopterin-synthase sulfur-carrier protein]-C-terminal Gly-Gly-AMP + diphosphate. It catalyses the reaction [molybdopterin-synthase sulfur-carrier protein]-C-terminal Gly-Gly-AMP + S-sulfanyl-L-cysteinyl-[cysteine desulfurase] + AH2 = [molybdopterin-synthase sulfur-carrier protein]-C-terminal-Gly-aminoethanethioate + L-cysteinyl-[cysteine desulfurase] + A + AMP + 2 H(+). The protein operates within tRNA modification; 5-methoxycarbonylmethyl-2-thiouridine-tRNA biosynthesis. It functions in the pathway cofactor biosynthesis; molybdopterin biosynthesis. Functionally, plays a central role in 2-thiolation of mcm(5)S(2)U at tRNA wobble positions of cytosolic tRNA(Lys), tRNA(Glu) and tRNA(Gln). Also essential during biosynthesis of the molybdenum cofactor. Acts by mediating the C-terminal thiocarboxylation of sulfur carriers URM1 and MOCS2A. Its N-terminus first activates URM1 and MOCS2A as acyl-adenylates (-COAMP), then the persulfide sulfur on the catalytic cysteine is transferred to URM1 and MOCS2A to form thiocarboxylation (-COSH) of their C-terminus. The reaction probably involves hydrogen sulfide that is generated from the persulfide intermediate and that acts as a nucleophile towards URM1 and MOCS2A. Subsequently, a transient disulfide bond is formed. Does not use thiosulfate as sulfur donor; NFS1 probably acting as a sulfur donor for thiocarboxylation reactions. The protein is Adenylyltransferase and sulfurtransferase MOCS3 of Arabidopsis thaliana (Mouse-ear cress).